Reading from the N-terminus, the 141-residue chain is Galactose-6-phosphate isomerase subunit LacA (141 aa).

The protein belongs to the LacAB/RpiB family. In terms of assembly, heteromultimeric protein consisting of LacA and LacB.

It carries out the reaction aldehydo-D-galactose 6-phosphate = keto-D-tagatose 6-phosphate. It participates in carbohydrate metabolism; D-galactose 6-phosphate degradation; D-tagatose 6-phosphate from D-galactose 6-phosphate: step 1/1. In Streptococcus pneumoniae (strain ATCC 700669 / Spain 23F-1), this protein is Galactose-6-phosphate isomerase subunit LacA.